The chain runs to 538 residues: Myeloid cell nuclear differentiation antigen-like protein (538 aa).

The Pyrin domain occupies 1–87; it reads MAEYKKIVLL…AKKLKTEKAK (87 aa). The tract at residues 120–306 is disordered; the sequence is SYKSVPSSKK…PQPQNQNIPR (187 aa). Composition is skewed to basic and acidic residues over residues 135 to 153 and 245 to 262; these read AKTEGEKKNKLTQDQDHLP and RREEETGVKKSKAAKEPD. The span at 276–305 shows a compositional bias: low complexity; it reads SPILHSSSSASSNIPSATNQKPQPQNQNIP. In terms of domain architecture, HIN-200 spans 299 to 499; the sequence is PQNQNIPRGA…CGDHSFVKIK (201 aa).

This sequence belongs to the HIN-200 family. Highest expression observed in spleen and thymus with moderate levels in bone marrow, lung, skin and heart, low levels in muscle, liver and intestine and little or no expression in brain and pancreas.

Its subcellular location is the nucleus. Functionally, suppresses cell growth when expressed ectopically. The polypeptide is Myeloid cell nuclear differentiation antigen-like protein (Mus musculus (Mouse)).